Here is a 110-residue protein sequence, read N- to C-terminus: Large ribosomal subunit protein uL24 (110 aa).

The protein belongs to the universal ribosomal protein uL24 family. As to quaternary structure, part of the 50S ribosomal subunit.

One of two assembly initiator proteins, it binds directly to the 5'-end of the 23S rRNA, where it nucleates assembly of the 50S subunit. Functionally, one of the proteins that surrounds the polypeptide exit tunnel on the outside of the subunit. The sequence is that of Large ribosomal subunit protein uL24 from Chloroflexus aggregans (strain MD-66 / DSM 9485).